We begin with the raw amino-acid sequence, 1691 residues long: Helicase SWR1 (1691 aa).

A disordered region spans residues M1–P244. 2 stretches are compositionally biased toward basic and acidic residues: residues S14 to Q23 and E54 to P68. Positions L126–K155 are enriched in polar residues. Residues S232 to S243 show a composition bias toward low complexity. Residues P335 to I409 enclose the HSA domain. Disordered regions lie at residues Q457–L615 and M628–I801. Residues Q467–Q521 are compositionally biased toward acidic residues. Low complexity predominate over residues V564–A575. Composition is skewed to acidic residues over residues E576–A612 and E645–E662. Residues P671–Q692 show a composition bias toward basic and acidic residues. 2 stretches are compositionally biased toward polar residues: residues G706 to N722 and P749 to T778. The Helicase ATP-binding domain occupies A823–A988. Position 836 to 843 (D836 to T843) interacts with ATP. The DEAH box motif lies at D939–H942. A Helicase C-terminal domain is found at I1375–T1525. Disordered stretches follow at residues E1594 to D1632 and D1669 to R1691. Polar residues predominate over residues K1605–Q1618. Basic residues predominate over residues D1677–R1691.

It belongs to the SNF2/RAD54 helicase family. SWR1 subfamily. As to quaternary structure, component of the SWR1 chromatin-remodeling complex.

It localises to the nucleus. The enzyme catalyses ATP + H2O = ADP + phosphate + H(+). Catalytic component of the SWR1 complex which mediates the ATP-dependent exchange of histone H2A for the H2A variant HZT1 leading to transcriptional regulation of selected genes by chromatin remodeling. The sequence is that of Helicase SWR1 (SWR1) from Gibberella zeae (strain ATCC MYA-4620 / CBS 123657 / FGSC 9075 / NRRL 31084 / PH-1) (Wheat head blight fungus).